The primary structure comprises 295 residues: sn-glycerol-3-phosphate transport system permease protein UgpA (295 aa).

Topologically, residues 1–11 (MSSSRPVFRSR) are cytoplasmic. Residues 12-32 (WLPYLLVAPQLIITVIFFIWP) form a helical membrane-spanning segment. At 33 to 80 (AGEALWYSLQSVDPFGFSSQFVGLDNFVALFHDSYYIDSFWTTIKFST) the chain is on the periplasmic side. An ABC transmembrane type-1 domain is found at 76–284 (IKFSTFVTVS…FLVIVLTVVQ (209 aa)). Residues 81-101 (FVTVSGLLVSLFFAALVEYIV) traverse the membrane as a helical segment. Residues 102-109 (RGSRFYQT) lie on the Cytoplasmic side of the membrane. Residues 110-130 (LMLLPYAVAPAVAAVLWIFLF) form a helical membrane-spanning segment. The Periplasmic segment spans residues 131–156 (NPGRGLITHFLAEFGYDWNHAQNSGQ). A helical transmembrane segment spans residues 157 to 177 (AMFLVVFASVWKQISYNFLFF). The Cytoplasmic portion of the chain corresponds to 178–207 (YAALQSIPRSLIEAAAIDGVGPIRRFFKIA). Residues 208–228 (LPLIAPVSFFLLVVNLVYAFF) traverse the membrane as a helical segment. Residues 229 to 262 (DTFPVIDAATSGGPVQAITTLIYKIYREGFTGLD) lie on the Periplasmic side of the membrane. Residues 263-283 (LASSAAQSVVLMFLVIVLTVV) form a helical membrane-spanning segment. At 284-295 (QFRYVESKVRYQ) the chain is on the cytoplasmic side.

This sequence belongs to the binding-protein-dependent transport system permease family. UgpAE subfamily. In terms of assembly, the complex is composed of two ATP-binding proteins (UgpC), two transmembrane proteins (UgpA and UgpE) and a solute-binding protein (UgpB).

The protein resides in the cell inner membrane. Its function is as follows. Part of the ABC transporter complex UgpBAEC involved in sn-glycerol-3-phosphate (G3P) import. Probably responsible for the translocation of the substrate across the membrane. In Shigella dysenteriae serotype 1 (strain Sd197), this protein is sn-glycerol-3-phosphate transport system permease protein UgpA (ugpA).